A 488-amino-acid chain; its full sequence is Glutamyl-tRNA(Gln) amidotransferase subunit A (488 aa).

Active-site charge relay system residues include Lys77 and Ser152. Ser176 serves as the catalytic Acyl-ester intermediate.

Belongs to the amidase family. GatA subfamily. Heterotrimer of A, B and C subunits.

It carries out the reaction L-glutamyl-tRNA(Gln) + L-glutamine + ATP + H2O = L-glutaminyl-tRNA(Gln) + L-glutamate + ADP + phosphate + H(+). Its function is as follows. Allows the formation of correctly charged Gln-tRNA(Gln) through the transamidation of misacylated Glu-tRNA(Gln) in organisms which lack glutaminyl-tRNA synthetase. The reaction takes place in the presence of glutamine and ATP through an activated gamma-phospho-Glu-tRNA(Gln). This is Glutamyl-tRNA(Gln) amidotransferase subunit A from Streptococcus pyogenes serotype M6 (strain ATCC BAA-946 / MGAS10394).